The primary structure comprises 884 residues: DNA replication licensing factor mcm2 (884 aa).

Residues 1–16 (MADSSESFNIATSPRT) are compositionally biased toward polar residues. Disordered stretches follow at residues 1–61 (MADS…IGDA) and 120–151 (LYDSDEEDEDRPARKRRMAERAAEGAPEEDEE). Over residues 47–58 (PREEEEDGEELI) the composition is skewed to acidic residues. The C4-type zinc-finger motif lies at 314-340 (CNKCNFILGPFFQSQNQEVKPGSCPEC). Positions 458–664 (IGERIFASIA…VQDEMLARFV (207 aa)) constitute an MCM domain. Positions 515 and 516 each coordinate ADP. The short motif at 640 to 643 (SRFD) is the Arginine finger element.

It belongs to the MCM family. As to quaternary structure, component of the mcm2-7 complex (RLF-M). The complex forms a toroidal hexameric ring with the proposed subunit order mcm2-mcm6-mcm4-mcm7-mcm3-mcm5. Component of the replisome complex. Component of the CMG helicase complex, composed of the mcm2-7 complex, the GINS complex and cdc45. In terms of processing, may be in a phosphorylated state in the mitotic mcm complex. Phosphorylated in the interphase mcm complex. Phosphorylated by the cdc7-dbf4 and cdc7-dbf4b complexes.

The protein resides in the nucleus. The protein localises to the chromosome. It carries out the reaction ATP + H2O = ADP + phosphate + H(+). Its function is as follows. Acts as a component of the MCM2-7 complex (MCM complex) which is the replicative helicase essential for 'once per cell cycle' DNA replication initiation and elongation in eukaryotic cells. Core component of CDC45-MCM-GINS (CMG) helicase, the molecular machine that unwinds template DNA during replication, and around which the replisome is built. The active ATPase sites in the MCM2-7 ring are formed through the interaction surfaces of two neighboring subunits such that a critical structure of a conserved arginine finger motif is provided in trans relative to the ATP-binding site of the Walker A box of the adjacent subunit. The six ATPase active sites, however, are likely to contribute differentially to the complex helicase activity. Required for the entry in S phase and for cell division. This chain is DNA replication licensing factor mcm2, found in Xenopus tropicalis (Western clawed frog).